Here is a 1553-residue protein sequence, read N- to C-terminus: Pre-mRNA cleavage complex 2 protein Pcf11 (1553 aa).

Serine 2 bears the N-acetylserine mark. One can recognise a CID domain in the interval 14-142 (AREDACRDYQ…ALDVRVNSLD (129 aa)). At serine 120 the chain carries Phosphoserine. Residue threonine 121 is modified to Phosphothreonine. The segment at 167–186 (NKSPDEPSTPGTVVSSPSIS) is disordered. Phosphoserine occurs at positions 169 and 182. A compositionally biased stretch (low complexity) spans 174-186 (STPGTVVSSPSIS). Positions 208 to 235 (LLAKQKQLLELQQKKLELELEQAKAQLA) form a coiled coil. The tract at residues 265–648 (AVKTPHQVPV…KQQHRLSVDA (384 aa)) is disordered. Lysine 291 is covalently cross-linked (Glycyl lysine isopeptide (Lys-Gly) (interchain with G-Cter in SUMO2)). Over residues 308 to 318 (HGKEQSHRKEF) the composition is skewed to basic and acidic residues. A compositionally biased stretch (polar residues) spans 321–342 (NTINQSDIKTSKNVPSEKLNSS). Lysine 329 participates in a covalent cross-link: Glycyl lysine isopeptide (Lys-Gly) (interchain with G-Cter in SUMO2). Composition is skewed to basic and acidic residues over residues 343-365 (KQEKSKSGERITKKELDQLDSKS), 381-422 (HTKD…DVKE), and 428-443 (EKKEKDEHMKSSEHRV). A Glycyl lysine isopeptide (Lys-Gly) (interchain with G-Cter in SUMO2) cross-link involves residue lysine 457. Positions 476–487 (STRKRSRSRSPK) are enriched in basic residues. Phosphoserine is present on residues serine 490, serine 495, serine 510, and serine 512. The span at 495–509 (SPKRRDRRSPKRRQR) shows a compositional bias: basic residues. Basic and acidic residues-rich tracts occupy residues 530–568 (SHMEEFPPPSREERNIKRSAKQDVRDPRRLKKMDEDRPQ) and 600–616 (SGWEENKSLQQGDEHSK). Serine 645 carries the post-translational modification Phosphoserine. Residue lysine 654 forms a Glycyl lysine isopeptide (Lys-Gly) (interchain with G-Cter in SUMO2) linkage. Serine 705 carries the post-translational modification Phosphoserine. Residues 707–733 (FNDRFPLKRPRYEDSDKPFVDGPASRF) are disordered. The span at 716 to 725 (PRYEDSDKPF) shows a compositional bias: basic and acidic residues. Lysine 723 participates in a covalent cross-link: Glycyl lysine isopeptide (Lys-Gly) (interchain with G-Cter in SUMO2). At serine 777 the chain carries Phosphoserine. Threonine 785 carries the post-translational modification Phosphothreonine. At serine 794 the chain carries Phosphoserine. Asymmetric dimethylarginine is present on residues arginine 805, arginine 820, and arginine 833. Serine 851 is subject to Phosphoserine. The interval 921-940 (HGPSGAAIRFDGPHGQPGGG) is disordered. 8 positions are modified to asymmetric dimethylarginine: arginine 929, arginine 944, arginine 957, arginine 982, arginine 995, arginine 1008, arginine 1092, and arginine 1103. A Glycyl lysine isopeptide (Lys-Gly) (interchain with G-Cter in SUMO2) cross-link involves residue lysine 1276. Residues 1286-1313 (DSATAQVTEAVAQPPPEEDEDQNEDQDV) form a disordered region. Acidic residues predominate over residues 1301-1313 (PEEDEDQNEDQDV). Glycyl lysine isopeptide (Lys-Gly) (interchain with G-Cter in SUMO2) cross-links involve residues lysine 1417, lysine 1509, lysine 1522, and lysine 1544. The segment at 1516-1553 (CESPKVKEEQIDAPPACSEESVATPTEIKTESDTVESV) is disordered.

As to quaternary structure, associates with the phosphorylated CTD domain of POLR2A /RNA polymerase II. In terms of processing, phosphorylation at Ser-120 and/or Thr-121 by WNK1 weakens its association with POLR2A/RNA polymerase II, promoting transcript release from the chromatin template and mRNA export to the cytoplasm.

The protein resides in the nucleus. In terms of biological role, component of pre-mRNA cleavage complex II, which promotes transcription termination by RNA polymerase II. The polypeptide is Pre-mRNA cleavage complex 2 protein Pcf11 (Mus musculus (Mouse)).